The chain runs to 311 residues: tRNA-cytidine(32) 2-sulfurtransferase (311 aa).

A PP-loop motif motif is present at residues 47-52 (SGGKDS). Residues cysteine 122, cysteine 125, and cysteine 213 each contribute to the [4Fe-4S] cluster site.

The protein belongs to the TtcA family. In terms of assembly, homodimer. Mg(2+) serves as cofactor. [4Fe-4S] cluster is required as a cofactor.

It is found in the cytoplasm. The catalysed reaction is cytidine(32) in tRNA + S-sulfanyl-L-cysteinyl-[cysteine desulfurase] + AH2 + ATP = 2-thiocytidine(32) in tRNA + L-cysteinyl-[cysteine desulfurase] + A + AMP + diphosphate + H(+). The protein operates within tRNA modification. Catalyzes the ATP-dependent 2-thiolation of cytidine in position 32 of tRNA, to form 2-thiocytidine (s(2)C32). The sulfur atoms are provided by the cysteine/cysteine desulfurase (IscS) system. This is tRNA-cytidine(32) 2-sulfurtransferase from Pectobacterium atrosepticum (strain SCRI 1043 / ATCC BAA-672) (Erwinia carotovora subsp. atroseptica).